Reading from the N-terminus, the 494-residue chain is Glycerol kinase (494 aa).

T13 contacts ADP. ATP is bound by residues T13, T14, and S15. A sn-glycerol 3-phosphate-binding site is contributed by T13. Residue R17 coordinates ADP. Sn-glycerol 3-phosphate-binding residues include R83, E84, Y135, and D244. Residues R83, E84, Y135, D244, and Q245 each contribute to the glycerol site. T266 and G309 together coordinate ADP. ATP is bound by residues T266, G309, Q313, and G410. 2 residues coordinate ADP: G410 and N414.

This sequence belongs to the FGGY kinase family.

The enzyme catalyses glycerol + ATP = sn-glycerol 3-phosphate + ADP + H(+). Its pathway is polyol metabolism; glycerol degradation via glycerol kinase pathway; sn-glycerol 3-phosphate from glycerol: step 1/1. With respect to regulation, inhibited by fructose 1,6-bisphosphate (FBP). Its function is as follows. Key enzyme in the regulation of glycerol uptake and metabolism. Catalyzes the phosphorylation of glycerol to yield sn-glycerol 3-phosphate. The polypeptide is Glycerol kinase (Shewanella sp. (strain MR-7)).